Reading from the N-terminus, the 192-residue chain is Na(+)-translocating ferredoxin:NAD(+) oxidoreductase complex subunit A (192 aa).

6 consecutive transmembrane segments (helical) span residues 4–24 (IFIMISAIFVNNFVLSRFLGI), 38–58 (VGMGVAVTFVMALASAITYVV), 71–91 (LQTIAFILIIAALVQLVEMII), 101–121 (ALGVYLPLITTNCAVLGVALI), 133–153 (IFNGVGAALGFTLAIVLFAGI), and 169–189 (FPIALLTAGLMAIAFLGFSGM).

It belongs to the NqrDE/RnfAE family. The complex is composed of six subunits: RnfA, RnfB, RnfC, RnfD, RnfE and RnfG.

The protein localises to the cell membrane. It catalyses the reaction 2 reduced [2Fe-2S]-[ferredoxin] + Na(+)(in) + NAD(+) + H(+) = 2 oxidized [2Fe-2S]-[ferredoxin] + Na(+)(out) + NADH. Functionally, part of a membrane-bound complex that couples electron transfer with translocation of ions across the membrane. Couples electron transfer from reduced ferredoxin to NAD(+) with electrogenic movement of Na(+) out of the cell. Involved in caffeate respiration. This chain is Na(+)-translocating ferredoxin:NAD(+) oxidoreductase complex subunit A, found in Acetobacterium woodii (strain ATCC 29683 / DSM 1030 / JCM 2381 / KCTC 1655 / WB1).